A 201-amino-acid chain; its full sequence is Recombination protein RecR (201 aa).

Residues 55-70 (CVCCGAFCEGRTCALC) form a C4-type zinc finger. The region spanning 78–173 (GIICVVERAQ…IVTRLASGIP (96 aa)) is the Toprim domain.

It belongs to the RecR family.

Functionally, may play a role in DNA repair. It seems to be involved in an RecBC-independent recombinational process of DNA repair. It may act with RecF and RecO. The chain is Recombination protein RecR from Treponema pallidum (strain Nichols).